Consider the following 328-residue polypeptide: Methionine import ATP-binding protein MetN 1 (328 aa).

In terms of domain architecture, ABC transporter spans 2–241 (ISIERLSKTY…PLSRLGRSLL (240 aa)). Residue 38–45 (GRSGAGKS) coordinates ATP.

Belongs to the ABC transporter superfamily. Methionine importer (TC 3.A.1.24) family. In terms of assembly, the complex is composed of two ATP-binding proteins (MetN), two transmembrane proteins (MetI) and a solute-binding protein (MetQ).

The protein resides in the cell inner membrane. The enzyme catalyses L-methionine(out) + ATP + H2O = L-methionine(in) + ADP + phosphate + H(+). The catalysed reaction is D-methionine(out) + ATP + H2O = D-methionine(in) + ADP + phosphate + H(+). Functionally, part of the ABC transporter complex MetNIQ involved in methionine import. Responsible for energy coupling to the transport system. The protein is Methionine import ATP-binding protein MetN 1 of Yersinia pestis bv. Antiqua (strain Nepal516).